The sequence spans 598 residues: MEQKNIRNFSIIAHIDHGKSTLSDRLLEHSLGFEKRLLQAQMLDTMEIERERGITIKLNAVELKINVDNNNYLFHLIDTPGHVDFTYEVSRSLAACEGVLLLVDATQGIQAQTISNAYLALENNLEIIPVINKIDMDNADIETTKDSLHNLLGVEKNSICLVSAKANLGIDQLIQTIIAKIPPPKGEINRPLKALLFDSYYDPYKGVVCFIRVFDGCLKVNDKVRFIKSNSVYQIVELGVKTPFFEKRDQLQAGDVGWFSAGIKKLRDVGVGDTIVSFDDQFTKPLAGYKKILPMIYCGLYPVDNSDYQNLKLAMEKIIISDAALEYEYETSQALGFGVRCGFLGLLHMDVIKERLEREYNLKLISAPPSVVYKVLLTNGKEISIDNPSLLPERSKIKAISEPFVKVFIDLPDQYLGSVIDLCQNFRGQYESLNEIDINRKRICYLMPLGEIIYSFFDKLKSISKGYASLNYEFYNYQHSQLEKVEIMLNKQKIDALSFISHKDFAFKRAKKFCTKLKELIPKHLFEIPIQATIGSKVIARETIKAVRKDVIAKLYGGDVSRKKKLLEKQKEGKKRLKAVGSVQLPQELFSHLLKDED.

A tr-type G domain is found at Lys-4 to Lys-185. GTP-binding positions include Asp-16 to Thr-21 and Asn-132 to Asp-135.

It belongs to the TRAFAC class translation factor GTPase superfamily. Classic translation factor GTPase family. LepA subfamily.

The protein localises to the cell membrane. It catalyses the reaction GTP + H2O = GDP + phosphate + H(+). Its function is as follows. Required for accurate and efficient protein synthesis under certain stress conditions. May act as a fidelity factor of the translation reaction, by catalyzing a one-codon backward translocation of tRNAs on improperly translocated ribosomes. Back-translocation proceeds from a post-translocation (POST) complex to a pre-translocation (PRE) complex, thus giving elongation factor G a second chance to translocate the tRNAs correctly. Binds to ribosomes in a GTP-dependent manner. The sequence is that of Elongation factor 4 from Mycoplasma genitalium (strain ATCC 33530 / DSM 19775 / NCTC 10195 / G37) (Mycoplasmoides genitalium).